The chain runs to 304 residues: Acetylglutamate kinase (304 aa).

Substrate-binding positions include 74–75, arginine 96, and asparagine 201; that span reads GG.

It belongs to the acetylglutamate kinase family. ArgB subfamily.

It is found in the cytoplasm. The catalysed reaction is N-acetyl-L-glutamate + ATP = N-acetyl-L-glutamyl 5-phosphate + ADP. Its pathway is amino-acid biosynthesis; L-arginine biosynthesis; N(2)-acetyl-L-ornithine from L-glutamate: step 2/4. Catalyzes the ATP-dependent phosphorylation of N-acetyl-L-glutamate. In Alkalilimnicola ehrlichii (strain ATCC BAA-1101 / DSM 17681 / MLHE-1), this protein is Acetylglutamate kinase.